A 245-amino-acid chain; its full sequence is Probable phosphatase PMI1003 (245 aa).

Residues His7, His9, His15, His40, Glu73, His101, His131, Asp192, and His194 each contribute to the Zn(2+) site.

It belongs to the PHP family. As to quaternary structure, homotrimer. Requires Zn(2+) as cofactor.

The chain is Probable phosphatase PMI1003 from Proteus mirabilis (strain HI4320).